Reading from the N-terminus, the 424-residue chain is Enolase (424 aa).

Q165 contributes to the (2R)-2-phosphoglycerate binding site. The Proton donor role is filled by E207. The Mg(2+) site is built by D244, E283, and D310. (2R)-2-phosphoglycerate contacts are provided by K335, R364, S365, and K386. Residue K335 is the Proton acceptor of the active site.

Belongs to the enolase family. Mg(2+) serves as cofactor.

It localises to the cytoplasm. The protein localises to the secreted. Its subcellular location is the cell surface. It catalyses the reaction (2R)-2-phosphoglycerate = phosphoenolpyruvate + H2O. It participates in carbohydrate degradation; glycolysis; pyruvate from D-glyceraldehyde 3-phosphate: step 4/5. Catalyzes the reversible conversion of 2-phosphoglycerate (2-PG) into phosphoenolpyruvate (PEP). It is essential for the degradation of carbohydrates via glycolysis. This chain is Enolase, found in Chlamydia caviae (strain ATCC VR-813 / DSM 19441 / 03DC25 / GPIC) (Chlamydophila caviae).